The sequence spans 269 residues: JmjC domain-containing protein 8 (269 aa).

Residues 1–24 form the signal peptide; the sequence is MAAAGRFGLLLLIVLWTMVTVVLP. N-linked (GlcNAc...) asparagine glycans are attached at residues N135, N145, and N214. The JmjC domain maps to 147–269; sequence TEWAPLFQHY…TSVFISTFLG (123 aa).

Oligomer. Dimer. Interacts with PKM; regulates angiogenesis and metabolism. N-glycosylated.

Its subcellular location is the endoplasmic reticulum lumen. It localises to the cytoplasm. Functionally, functions as a positive regulator of TNF-induced NF-kappaB signaling. Regulates angiogenesis and cellular metabolism through interaction with PKM. The sequence is that of JmjC domain-containing protein 8 from Rattus norvegicus (Rat).